We begin with the raw amino-acid sequence, 1519 residues long: DNA (cytosine-5)-methyltransferase 4 (1519 aa).

Positions 1–24 are enriched in basic and acidic residues; it reads MEMETKAGKQKKRSVDSDDDVSKE. The segment at 1–31 is disordered; the sequence is MEMETKAGKQKKRSVDSDDDVSKERRPKRAA. Lys-583 is covalently cross-linked (Glycyl lysine isopeptide (Lys-Gly) (interchain with G-Cter in ubiquitin)). The disordered stretch occupies residues 641–668; it reads ENVEEEELEEVEEEDENEEDDPEENELE. The segment covering 642 to 668 has biased composition (acidic residues); the sequence is NVEEEELEEVEEEDENEEDDPEENELE. BAH domains are found at residues 715–849 and 916–1033; these read DVVV…FSLP and TTLK…KQFP. Residues 1078–1512 form the SAM-dependent MTase C5-type domain; the sequence is LATLDIFAGC…RKLKEALYLK (435 aa). Cys-1183 is an active-site residue.

The protein belongs to the class I-like SAM-binding methyltransferase superfamily. C5-methyltransferase family. In terms of tissue distribution, expressed at low levels in vegetative and floral organs.

The protein resides in the nucleus. It catalyses the reaction a 2'-deoxycytidine in DNA + S-adenosyl-L-methionine = a 5-methyl-2'-deoxycytidine in DNA + S-adenosyl-L-homocysteine + H(+). In terms of biological role, maintains chromatin CpG methylation that plays a role in genomic imprinting, regulation of embryogenesis and seed viability. Required for proper patterns of CG DNA methylation in dividing cells. This chain is DNA (cytosine-5)-methyltransferase 4 (MET4), found in Arabidopsis thaliana (Mouse-ear cress).